Reading from the N-terminus, the 333-residue chain is Phospholipid phosphatase-related protein type 1 (333 aa).

3 helical membrane passes run 12-32 (IIPCFIFVELVIMAGTVLLAY), 66-86 (FIQPLILYCVVAAAPTAIIFV), and 126-146 (FIGVFAFGLFATDIFVNAGQV). N162 is a glycosylation site (N-linked (GlcNAc...) asparagine). 3 helical membrane-spanning segments follow: residues 200–217 (ASLSVYSAVYVTMYITST), 223–243 (SRLAKPVLCLGLLCAAFLTGL), and 256–276 (VVAGFILGSSIALFLGICVVN).

This sequence belongs to the PA-phosphatase related phosphoesterase family.

The protein resides in the cell membrane. Its subcellular location is the cell projection. It localises to the neuron projection. Its function is as follows. May play a role in neurite outgrowth and neurogenesis. This is Phospholipid phosphatase-related protein type 1 (plppr1) from Danio rerio (Zebrafish).